The following is a 292-amino-acid chain: Type II methyltransferase M.SmaI (292 aa).

A disordered region spans residues 110–130 (WRDKDDKNKGRAMSYRPPTPE).

It belongs to the N(4)/N(6)-methyltransferase family. N(4) subfamily.

The enzyme catalyses a 2'-deoxycytidine in DNA + S-adenosyl-L-methionine = an N(4)-methyl-2'-deoxycytidine in DNA + S-adenosyl-L-homocysteine + H(+). Its function is as follows. A beta subtype methylase thatnrecognizes the double-stranded sequence 5'-CCCGGG-3', methylates C-2 on both strands, and protects the DNA from cleavage by the SmaI endonuclease. The protein is Type II methyltransferase M.SmaI (smaIM) of Serratia marcescens.